Here is a 417-residue protein sequence, read N- to C-terminus: Serine hydroxymethyltransferase (417 aa).

(6S)-5,6,7,8-tetrahydrofolate-binding positions include L121 and 125 to 127; that span reads GHL. K229 bears the N6-(pyridoxal phosphate)lysine mark. 355 to 357 is a binding site for (6S)-5,6,7,8-tetrahydrofolate; the sequence is SPF.

Belongs to the SHMT family. Homodimer. It depends on pyridoxal 5'-phosphate as a cofactor.

It is found in the cytoplasm. It catalyses the reaction (6R)-5,10-methylene-5,6,7,8-tetrahydrofolate + glycine + H2O = (6S)-5,6,7,8-tetrahydrofolate + L-serine. The protein operates within one-carbon metabolism; tetrahydrofolate interconversion. It participates in amino-acid biosynthesis; glycine biosynthesis; glycine from L-serine: step 1/1. Catalyzes the reversible interconversion of serine and glycine with tetrahydrofolate (THF) serving as the one-carbon carrier. This reaction serves as the major source of one-carbon groups required for the biosynthesis of purines, thymidylate, methionine, and other important biomolecules. Also exhibits THF-independent aldolase activity toward beta-hydroxyamino acids, producing glycine and aldehydes, via a retro-aldol mechanism. In Buchnera aphidicola subsp. Acyrthosiphon pisum (strain APS) (Acyrthosiphon pisum symbiotic bacterium), this protein is Serine hydroxymethyltransferase.